We begin with the raw amino-acid sequence, 467 residues long: Septin-10 (467 aa).

The 267-residue stretch at 63–329 (QGFCFNILCV…ELYRRCKLEE (267 aa)) folds into the Septin-type G domain. A G1 motif region spans residues 73–80 (GETGIGKS). Residues 73–80 (GETGIGKS), glycine 128, 209–217 (KADTVSKTE), glycine 263, and arginine 278 each bind GTP. The segment at 125-128 (NTVG) is G3 motif. Positions 208 to 211 (AKAD) are G4 motif.

This sequence belongs to the TRAFAC class TrmE-Era-EngA-EngB-Septin-like GTPase superfamily. Septin GTPase family. As to quaternary structure, septins polymerize into heterooligomeric protein complexes that form filaments, and can associate with cellular membranes, actin filaments and microtubules. GTPase activity is required for filament formation. Interacts with ADGB. Post-translationally, proteolytically cleaved in vitro in a calmodulin-dependent manner.

The protein localises to the cytoplasm. It localises to the cytoskeleton. The protein resides in the cell projection. Its subcellular location is the cilium. It is found in the flagellum. Filament-forming cytoskeletal GTPase. May play a role in cytokinesis (Potential). The polypeptide is Septin-10 (Pongo abelii (Sumatran orangutan)).